The sequence spans 173 residues: RNA pyrophosphohydrolase (173 aa).

The Nudix hydrolase domain maps to 11–164 (PYRKCVGIVV…KKHVYMKVVS (154 aa)). A Nudix box motif is present at residues 52-73 (GGIDEDEKPLDAAYRELYEETG).

Belongs to the Nudix hydrolase family. RppH subfamily. It depends on a divalent metal cation as a cofactor.

Accelerates the degradation of transcripts by removing pyrophosphate from the 5'-end of triphosphorylated RNA, leading to a more labile monophosphorylated state that can stimulate subsequent ribonuclease cleavage. The protein is RNA pyrophosphohydrolase of Bartonella tribocorum (strain CIP 105476 / IBS 506).